A 1035-amino-acid chain; its full sequence is MSPAALKNMEENKTTVMTTSHSSNDGGETVKGYSDAVEVRFSDFCKSGLALDENTCTQAIKLFKDTKHLLMTNVSSIGNGTSEEAERFWFAFVSYSVKRLSEKNRDDAQQKSDDPGLTLCQILRLAKLNIVDFFKELPHFIVKAGPILSNIYGADWENRLEAKELQANFVHLSILSRHYKRACRELFLTSDASSDKQPAISNEATHVSDHHRFGWLLFLALRVHAFSRFKDLVTCTNGLVSVLAVLIIHVPVRFRNFSFNDSQWFVRKGDKGVDLLASLCNKYDTSEEVLRKSMETTNNLIANILKKKPHSASEYKNENLVNINPDGLIYYEDLMEESSLQSSLNILEKDYDDAIRNKAELDERVFINEEDSLLGSGSVSAGSLNITGAKRKFDLISSPTKTITSPLSPHRSPASHANGIPGSANSKMAATPVSTAMTTAKWLRTIISPLPSKPSAQLERFLVSCDKDVTNDVIRRAQIILEAIFPSSSLGERCVNGSLQSTNLMDNIWAEQRRLEALKLYYRVLESMCTAEAQILHATNLTSLLTNERFHRCMLACSAELVVATYKTVTMLFPAVLERTGITAFDLSKVIESFIRHEESLPRELRRHLNSLEERLLDSMVWEKGSSLYNSLTVARPALSAEINRLGLLAEPMPSLDAIAMHINFSSGCLPPVPSLQKHETSPGSGQNGDLRSPKRPCTDFRSVLVERNSFTSPVKDRLLGNLKSKLPPPPLQSAFASPTRPNPGGGGETCAETGINVFFTKINKLAAVRINGMIEKLQPSQQHIRENVYRLFQLILSHQTSLFFNRHIDQIILCCFYGVAKISKLNLTFREIIYNYRRQPHCKTLVFRSVFVDWSSARHNGRTGQDHVDIITFYNEIFIPAAKPLLVDVGSAGTTVKASNVPEVGNNKDGQCPASPKVSPFPSLPDMSPKKVSSAHNVYVSPLRSSKMDALISNSSKSYYACVGESTHAYQSPSKDLNAINNRLNGNRKARGTLNLDNDVGLVSDSMVANSLGLQNGNCASTSGAALKSEQSDS.

A disordered region spans residues 403–426; it reads ITSPLSPHRSPASHANGIPGSANS. Positions 431 to 632 are domain A; it reads TPVSTAMTTA…EKGSSLYNSL (202 aa). Residues 431–885 form a pocket region; the sequence is TPVSTAMTTA…NEIFIPAAKP (455 aa). The spacer stretch occupies residues 633 to 753; sequence TVARPALSAE…PGGGGETCAE (121 aa). Disordered regions lie at residues 674–697 and 721–748; these read PSLQ…PKRP and GNLK…GGGG. The interval 754–885 is domain B; the sequence is TGINVFFTKI…NEIFIPAAKP (132 aa).

It belongs to the retinoblastoma protein (RB) family.

The protein localises to the nucleus. Regulator of biological processes that recruits a histone deacetylase to control gene transcription. May play a role in the entry into mitosis, negatively regulating the cell proliferation. Formation of stable complexes with geminiviridae replication-associated proteins may create a cellular environment which favors viral DNA replication. This is Retinoblastoma-related protein (RBL901) from Populus trichocarpa (Western balsam poplar).